The chain runs to 297 residues: Molybdate/tungstate import ATP-binding protein WtpC (297 aa).

The ABC transporter domain maps to 2 to 226 (LKVNNLSKIW…PKNKKVAEFL (225 aa)). An ATP-binding site is contributed by 32–39 (GPSGAGKS).

It belongs to the ABC transporter superfamily. Sulfate/tungstate importer (TC 3.A.1.6) family. The complex is composed of two ATP-binding proteins (WtpC), two transmembrane proteins (WtpB) and a solute-binding protein (WtpA).

It is found in the cell membrane. The catalysed reaction is tungstate(in) + ATP + H2O = tungstate(out) + ADP + phosphate + H(+). Part of the ABC transporter complex WtpABC involved in molybdate/tungstate import. Responsible for energy coupling to the transport system. This is Molybdate/tungstate import ATP-binding protein WtpC (wtpC) from Methanocaldococcus jannaschii (strain ATCC 43067 / DSM 2661 / JAL-1 / JCM 10045 / NBRC 100440) (Methanococcus jannaschii).